We begin with the raw amino-acid sequence, 217 residues long: Large ribosomal subunit protein uL1A (217 aa).

Position 2 is an N-acetylserine (serine 2). Lysine 47 carries the post-translational modification N6-methyllysine; by RKM5. 2 positions are modified to phosphoserine: serine 79 and serine 86.

Belongs to the universal ribosomal protein uL1 family. In terms of assembly, component of the large ribosomal subunit (LSU). Mature yeast ribosomes consist of a small (40S) and a large (60S) subunit. The 40S small subunit contains 1 molecule of ribosomal RNA (18S rRNA) and 33 different proteins (encoded by 57 genes). The large 60S subunit contains 3 rRNA molecules (25S, 5.8S and 5S rRNA) and 46 different proteins (encoded by 81 genes). uL1 forms part of the L1 stalk. N-terminally acetylated by acetyltransferase NatA.

It localises to the cytoplasm. Its function is as follows. Component of the ribosome, a large ribonucleoprotein complex responsible for the synthesis of proteins in the cell. The small ribosomal subunit (SSU) binds messenger RNAs (mRNAs) and translates the encoded message by selecting cognate aminoacyl-transfer RNA (tRNA) molecules. The large subunit (LSU) contains the ribosomal catalytic site termed the peptidyl transferase center (PTC), which catalyzes the formation of peptide bonds, thereby polymerizing the amino acids delivered by tRNAs into a polypeptide chain. The nascent polypeptides leave the ribosome through a tunnel in the LSU and interact with protein factors that function in enzymatic processing, targeting, and the membrane insertion of nascent chains at the exit of the ribosomal tunnel. uL1 forms part of the L1 stalk, a mobile element that plays a role in evacuating the exit-site tRNA. This is Large ribosomal subunit protein uL1A from Saccharomyces cerevisiae (strain ATCC 204508 / S288c) (Baker's yeast).